The primary structure comprises 123 residues: ATP synthase epsilon chain (123 aa).

The protein belongs to the ATPase epsilon chain family. F-type ATPases have 2 components, CF(1) - the catalytic core - and CF(0) - the membrane proton channel. CF(1) has five subunits: alpha(3), beta(3), gamma(1), delta(1), epsilon(1). CF(0) has three main subunits: a, b and c.

It localises to the cell inner membrane. Functionally, produces ATP from ADP in the presence of a proton gradient across the membrane. The polypeptide is ATP synthase epsilon chain (Helicobacter pylori (strain HPAG1)).